Consider the following 125-residue polypeptide: MRHYEVVFIVHPDQSEQVPAMVERYQTLVTGQGGAVHRLEDWGRRQLAYPIQKLVKAHYVCMNIECGQATLDELEHSFRYNDAVLRHLVIKTKKAQTSPSIMMKSVEREEARKASTEASAPAQAQ.

The tract at residues 99–125 is disordered; that stretch reads PSIMMKSVEREEARKASTEASAPAQAQ. Basic and acidic residues predominate over residues 105–115; the sequence is SVEREEARKAS. Positions 116–125 are enriched in polar residues; sequence TEASAPAQAQ.

It belongs to the bacterial ribosomal protein bS6 family.

Binds together with bS18 to 16S ribosomal RNA. In Bordetella petrii (strain ATCC BAA-461 / DSM 12804 / CCUG 43448), this protein is Small ribosomal subunit protein bS6.